A 460-amino-acid chain; its full sequence is Methylenetetrahydrofolate--tRNA-(uracil-5-)-methyltransferase TrmFO (460 aa).

12–17 (GGGLAG) provides a ligand contact to FAD.

It belongs to the MnmG family. TrmFO subfamily. The cofactor is FAD.

The protein localises to the cytoplasm. The catalysed reaction is uridine(54) in tRNA + (6R)-5,10-methylene-5,6,7,8-tetrahydrofolate + NADH + H(+) = 5-methyluridine(54) in tRNA + (6S)-5,6,7,8-tetrahydrofolate + NAD(+). The enzyme catalyses uridine(54) in tRNA + (6R)-5,10-methylene-5,6,7,8-tetrahydrofolate + NADPH + H(+) = 5-methyluridine(54) in tRNA + (6S)-5,6,7,8-tetrahydrofolate + NADP(+). Catalyzes the folate-dependent formation of 5-methyl-uridine at position 54 (M-5-U54) in all tRNAs. This is Methylenetetrahydrofolate--tRNA-(uracil-5-)-methyltransferase TrmFO from Crocosphaera subtropica (strain ATCC 51142 / BH68) (Cyanothece sp. (strain ATCC 51142)).